A 145-amino-acid polypeptide reads, in one-letter code: Ribosomal RNA large subunit methyltransferase H (145 aa).

S-adenosyl-L-methionine-binding positions include G94 and L113–F118.

Belongs to the RNA methyltransferase RlmH family. As to quaternary structure, homodimer.

It is found in the cytoplasm. The enzyme catalyses pseudouridine(1915) in 23S rRNA + S-adenosyl-L-methionine = N(3)-methylpseudouridine(1915) in 23S rRNA + S-adenosyl-L-homocysteine + H(+). Specifically methylates the pseudouridine at position 1915 (m3Psi1915) in 23S rRNA. This Sorangium cellulosum (strain So ce56) (Polyangium cellulosum (strain So ce56)) protein is Ribosomal RNA large subunit methyltransferase H.